Reading from the N-terminus, the 346-residue chain is Holliday junction branch migration complex subunit RuvB (346 aa).

The large ATPase domain (RuvB-L) stretch occupies residues 1 to 181; that stretch reads MSDRNPLIDA…FGIPVRLNFY (181 aa). Residues Leu-20, Arg-21, Gly-62, Lys-65, Thr-66, Thr-67, 128–130, Arg-171, Tyr-181, and Arg-218 contribute to the ATP site; that span reads EDF. A Mg(2+)-binding site is contributed by Thr-66. The small ATPAse domain (RuvB-S) stretch occupies residues 182–252; it reads TVEELEYIVR…IADEALSRLE (71 aa). The tract at residues 255–346 is head domain (RuvB-H); sequence NRGLDQLDRR…SQYGLFMEDE (92 aa). Residues Arg-291, Arg-310, and Arg-315 each coordinate DNA.

It belongs to the RuvB family. As to quaternary structure, homohexamer. Forms an RuvA(8)-RuvB(12)-Holliday junction (HJ) complex. HJ DNA is sandwiched between 2 RuvA tetramers; dsDNA enters through RuvA and exits via RuvB. An RuvB hexamer assembles on each DNA strand where it exits the tetramer. Each RuvB hexamer is contacted by two RuvA subunits (via domain III) on 2 adjacent RuvB subunits; this complex drives branch migration. In the full resolvosome a probable DNA-RuvA(4)-RuvB(12)-RuvC(2) complex forms which resolves the HJ.

It localises to the cytoplasm. The catalysed reaction is ATP + H2O = ADP + phosphate + H(+). Its function is as follows. The RuvA-RuvB-RuvC complex processes Holliday junction (HJ) DNA during genetic recombination and DNA repair, while the RuvA-RuvB complex plays an important role in the rescue of blocked DNA replication forks via replication fork reversal (RFR). RuvA specifically binds to HJ cruciform DNA, conferring on it an open structure. The RuvB hexamer acts as an ATP-dependent pump, pulling dsDNA into and through the RuvAB complex. RuvB forms 2 homohexamers on either side of HJ DNA bound by 1 or 2 RuvA tetramers; 4 subunits per hexamer contact DNA at a time. Coordinated motions by a converter formed by DNA-disengaged RuvB subunits stimulates ATP hydrolysis and nucleotide exchange. Immobilization of the converter enables RuvB to convert the ATP-contained energy into a lever motion, pulling 2 nucleotides of DNA out of the RuvA tetramer per ATP hydrolyzed, thus driving DNA branch migration. The RuvB motors rotate together with the DNA substrate, which together with the progressing nucleotide cycle form the mechanistic basis for DNA recombination by continuous HJ branch migration. Branch migration allows RuvC to scan DNA until it finds its consensus sequence, where it cleaves and resolves cruciform DNA. The polypeptide is Holliday junction branch migration complex subunit RuvB (Brucella melitensis biotype 2 (strain ATCC 23457)).